The sequence spans 1353 residues: MASSPHQQLLHHHSTEVSCDSSGDSNSVRVKINPKQLSSNTHPKHCKYSISSSCSSSGDSGGLPRRVGGGGRLRRQKKLPQLFERASSRWWDPKFDSMNLEEACLERCFPQTQRRFRYALFYVGFACLLWSIYFAVHMKSKVIVMVVPALCFLVVCVGFFLFTFTKLYARHYAWTSLALTLLVFALTLAAQFQVWTPLSGRVDSSNHTLTATPADTCLSQVGSFSICIEVLLLLYTVMQLPLYLSLFLGVVYSVLFETFGYHFRNEDCYPSPGPGALHWELLSRALLHVCIHAIGIHLFVMSQVRSRSTFLKVGQSIMHGKDLEVEKALKERMIHSVMPRIIADDLMKQGDEESENSVKRHATSSPKNRKKKSSIQKAPIAFRPFKMQQIEEVSILFADIVGFTKMSANKSAHALVGLLNDLFGRFDRLCEQTKCEKISTLGDCYYCVAGCPEPRADHAYCCIEMGLGMIKAIEQFCQEKKEMVNMRVGVHTGTVLCGILGMRRFKFDVWSNDVNLANLMEQLGVAGKVHISEATAKYLDDRYEMEDGRVIERLGQSVVADQLKGLKTYLISGQRAKESHCSCAEALLSGFEVIDDSRESSGPRGQGTASPGSVSDLAQTVKTFDNLKTCPSCGITFAPKSEAGAEGGTVQNGCQDEPKTSTKASGGPNSKTQNGLLSPPAEEKLTNSQTSLCEILQEKGRWAGVSLDQSALLPLRFKNIREKTDAHFVDVIKEDSLMKDYFFKPPINQFSLNFLDQELERSYRTSYQEEVIKNSPVKTFASATFSSLLDVFLSTTVFLILSITCFLKYGATATPPPPAALAVFGADLLLEVLSLIVSIRMVFFLEDVMTCTKWLLEWIAGWLPRHCIGAILVSLPALAVYSHITSEFETNIHVTMFTGSAVLVAVVHYCNFCQLSSWMRSSLATIVGAGLLLLLHISLCQDSSIVMSPLDSAQNFSAQRNPCNSSVLQDGRRPASLIGKELILTFFLLLLLVWFLNREFEVSYRLHYHGDVEADLHRTKIQSMRDQADWLLRNIIPYHVAEQLKVSQTYSKNHDSGGVIFASIVNFSEFYEENYEGGKECYRVLNELIGDFDELLSKPDYNSIEKIKTIGATYMAASGLNTAQCQEGGHPQEHLRILFEFAKEMMRVVDDFNNNMLWFNFKLRVGFNHGPLTAGVIGTTKLLYDIWGDTVNIASRMDTTGVECRIQVSEESYRVLSKMGYDFDYRGTVNVKGKGQMKTYLYPKCTDNGVVPQHQLSISPDIRVQVDGSIGRSPTDEIANLVPSVQYSDKASLGSDDSTQAKEARLSSKRSWREPVKAEERFPFGKAIEKDSCEDIGVEEASELSKLNVSKSV.

Disordered regions lie at residues 1–27 (MASS…DSNS) and 51–73 (SSSC…GGRL). The Cytoplasmic portion of the chain corresponds to 1–117 (MASSPHQQLL…CFPQTQRRFR (117 aa)). The span at 16–27 (EVSCDSSGDSNS) shows a compositional bias: polar residues. The segment covering 51 to 66 (SSSCSSSGDSGGLPRR) has biased composition (low complexity). A helical membrane pass occupies residues 118–138 (YALFYVGFACLLWSIYFAVHM). The Extracellular portion of the chain corresponds to 139–141 (KSK). The chain crosses the membrane as a helical span at residues 142–162 (VIVMVVPALCFLVVCVGFFLF). Residues 163-171 (TFTKLYARH) lie on the Cytoplasmic side of the membrane. The helical transmembrane segment at 172-192 (YAWTSLALTLLVFALTLAAQF) threads the bilayer. The Extracellular segment spans residues 193–215 (QVWTPLSGRVDSSNHTLTATPAD). The N-linked (GlcNAc...) asparagine glycan is linked to asparagine 206. A helical transmembrane segment spans residues 216 to 235 (TCLSQVGSFSICIEVLLLLY). The Cytoplasmic segment spans residues 236–241 (TVMQLP). A helical transmembrane segment spans residues 242–259 (LYLSLFLGVVYSVLFETF). Over 260–280 (GYHFRNEDCYPSPGPGALHWE) the chain is Extracellular. The helical transmembrane segment at 281–301 (LLSRALLHVCIHAIGIHLFVM) threads the bilayer. Residues 302 to 786 (SQVRSRSTFL…VKTFASATFS (485 aa)) lie on the Cytoplasmic side of the membrane. A disordered region spans residues 349 to 375 (QGDEESENSVKRHATSSPKNRKKKSSI). Basic residues predominate over residues 359–374 (KRHATSSPKNRKKKSS). Mg(2+) contacts are provided by aspartate 399, isoleucine 400, and aspartate 443. ATP is bound by residues 399 to 404 (DIVGFT), 441 to 443 (LGD), and arginine 487. 2 disordered regions span residues 596 to 615 (DSRE…GSVS) and 641 to 685 (SEAG…EEKL). 2 positions are modified to phosphoserine: serine 610 and serine 613. Polar residues predominate over residues 661–676 (STKASGGPNSKTQNGL). Phosphoserine occurs at positions 688, 691, and 706. A helical membrane pass occupies residues 787–807 (SLLDVFLSTTVFLILSITCFL). Residues 808–818 (KYGATATPPPP) lie on the Extracellular side of the membrane. Residues 819 to 839 (AALAVFGADLLLEVLSLIVSI) traverse the membrane as a helical segment. The Cytoplasmic portion of the chain corresponds to 840–867 (RMVFFLEDVMTCTKWLLEWIAGWLPRHC). A helical membrane pass occupies residues 868–888 (IGAILVSLPALAVYSHITSEF). The Extracellular segment spans residues 889–891 (ETN). A helical membrane pass occupies residues 892 to 912 (IHVTMFTGSAVLVAVVHYCNF). Over 913–920 (CQLSSWMR) the chain is Cytoplasmic. A helical transmembrane segment spans residues 921-941 (SSLATIVGAGLLLLLHISLCQ). Residues 942-975 (DSSIVMSPLDSAQNFSAQRNPCNSSVLQDGRRPA) are Extracellular-facing. N-linked (GlcNAc...) asparagine glycosylation is found at asparagine 955 and asparagine 964. A helical transmembrane segment spans residues 976-996 (SLIGKELILTFFLLLLLVWFL). The Cytoplasmic portion of the chain corresponds to 997 to 1353 (NREFEVSYRL…LSKLNVSKSV (357 aa)). ATP-binding positions include lysine 1108, 1185-1187 (DIW), 1192-1196 (NIASR), and lysine 1232. Phosphoserine is present on residues serine 1257, serine 1259, serine 1295, serine 1307, and serine 1332. The disordered stretch occupies residues 1290 to 1314 (KASLGSDDSTQAKEARLSSKRSWRE). Positions 1299 to 1314 (TQAKEARLSSKRSWRE) are enriched in basic and acidic residues.

Belongs to the adenylyl cyclase class-4/guanylyl cyclase family. It depends on Mg(2+) as a cofactor. Mn(2+) is required as a cofactor. Detected in brain, spleen, lung, liver and testis (at protein level). Detected in brain, especially in hippocampus, cerebellum and neocortex. Found in decreasing order in skeletal muscle, heart, adrenal gland, ovary and brain; and to a lesser extent, in kidney, liver, testis, lung, thymus and spleen.

It localises to the cell membrane. The enzyme catalyses ATP = 3',5'-cyclic AMP + diphosphate. With respect to regulation, insensitive to calcium/calmodulin, forskolin and somatostatin. Stimulated by beta-adrenergic receptor activation. Activity is down-regulated by calcium/calcineurin. In terms of biological role, adenylyl cyclase that catalyzes the formation of the signaling molecule cAMP in response to activation of G protein-coupled receptors. Contributes to signaling cascades activated by CRH (corticotropin-releasing factor), corticosteroids and by beta-adrenergic receptors. In Mus musculus (Mouse), this protein is Adenylate cyclase type 9 (Adcy9).